A 119-amino-acid polypeptide reads, in one-letter code: uncharacterized protein (119 aa).

This is an uncharacterized protein from Aquifex aeolicus (strain VF5).